We begin with the raw amino-acid sequence, 78 residues long: Conotoxin TsMSGL-11 (78 aa).

The first 24 residues, 1–24 (MSGLGIMVLTLLLLVFMATSHQDA), serve as a signal peptide directing secretion. Residues 25–44 (GEKQATQRDAINVRRRRSIT) constitute a propeptide that is removed on maturation. 3 disulfides stabilise this stretch: Cys-51–Cys-63, Cys-55–Cys-72, and Cys-62–Cys-76. Position 77 is a phenylalanine amide (Phe-77).

Belongs to the conotoxin O3 superfamily. As to expression, expressed by the venom duct.

The protein localises to the secreted. This Conus tessulatus (Tessellate cone) protein is Conotoxin TsMSGL-11.